We begin with the raw amino-acid sequence, 185 residues long: MLQAIYNETKDLMQKSIQALNRDFSTLRSAKVSVNILDHIKVDYYGTPTTLNQVGSVMSLDATTLQISPWEKNLLKEIERSIQEANIGVNPNNDGETIKLFFPPMTTEQRKLIAKDAKAMGEKAKVAVRNIRQDANNKIKKLEKDKEISEDESKKAQEQIQKITDEAIKTIDESVKNKEDAILKV.

Belongs to the RRF family.

It is found in the cytoplasm. Its function is as follows. Responsible for the release of ribosomes from messenger RNA at the termination of protein biosynthesis. May increase the efficiency of translation by recycling ribosomes from one round of translation to another. The protein is Ribosome-recycling factor of Helicobacter pylori (strain Shi470).